Here is a 695-residue protein sequence, read N- to C-terminus: Follicle-stimulating hormone receptor (695 aa).

Positions 1 to 17 (MALLLVSLLAFMSLGSG) are cleaved as a signal peptide. Cystine bridges form between Cys18-Cys25 and Cys23-Cys32. The 29-residue stretch at 18 to 46 (CHHRLCHCSNRVFLCQESKVTEIPSDLPR) folds into the LRRNT domain. Residues 18–366 (CHHRLCHCSN…EDIMGYNILR (349 aa)) lie on the Extracellular side of the membrane. LRR repeat units lie at residues 49–72 (VELR…FGDL), 73–97 (EKIE…LPNL), 98–118 (HEIR…AFQN), 119–143 (LPNL…KIQS), 144–169 (LQKV…LGLS), 170–192 (SESV…AFNG), 193–216 (TQLD…VFQG), 217–240 (ASGP…GLEN), and 241–259 (LKKL…PSLE). N-linked (GlcNAc...) asparagine glycosylation is found at Asn191 and Asn199. 4 disulfides stabilise this stretch: Cys275–Cys346, Cys276–Cys292, Cys276–Cys356, and Cys292–Cys338. An N-linked (GlcNAc...) asparagine glycan is attached at Asn293. Residue Tyr335 is modified to Sulfotyrosine. The helical transmembrane segment at 367-387 (VLIWFISILAITGNVAVLVVL) threads the bilayer. The Cytoplasmic portion of the chain corresponds to 388-398 (TTSQYKLTVPR). Residues 399–421 (FLMCNLAFADLCIGIYLLLIASV) traverse the membrane as a helical segment. The Extracellular segment spans residues 422-443 (DVHTRTLYHNYAIDWQTGAGCA). Cys442 and Cys517 are disulfide-bonded. A helical membrane pass occupies residues 444-465 (DCWLFTVFASELSVYTLTAITL). The Cytoplasmic segment spans residues 466-485 (ERWHTITHAMQLDCKVQLRH). Residues 486-508 (AASIMVIGWIFSSAAALFPIFGV) form a helical membrane-spanning segment. Residues 509–528 (SSYMKVSICLPMDIDSPLSQ) are Extracellular-facing. Residues 529–550 (LYVMFLLVLNVLAFVVICGCYL) traverse the membrane as a helical segment. The Cytoplasmic segment spans residues 551 to 573 (HIYLTVRNPNIVSSASDTRIAKR). Residues 574 to 597 (MATLIFTDFLCMAPISFFAISASL) form a helical membrane-spanning segment. At 598-608 (KVPLITVSKAK) the chain is on the extracellular side. The chain crosses the membrane as a helical span at residues 609-630 (ILLVLFYPINSCANPFLYAIFT). The Cytoplasmic portion of the chain corresponds to 631–695 (KNFRRDLFIL…LAPLNHLAQN (65 aa)). The disordered stretch occupies residues 658-677 (TSSTAHNSHPRNGHSSSVSR).

It belongs to the G-protein coupled receptor 1 family. FSH/LSH/TSH subfamily. As to quaternary structure, homotrimer. Functions as a homotrimer binding the FSH hormone heterodimer composed of CGA and FSHB. Interacts with ARRB2. Interacts with APPL2; interaction is independent of follicle stimulating hormone stimulation. Post-translationally, N-glycosylated; indirectly required for FSH-binding, possibly via a conformational change that allows high affinity binding of hormone. Sulfated.

It localises to the cell membrane. In terms of biological role, g protein-coupled receptor for follitropin, the follicle-stimulating hormone. Through cAMP production activates the downstream PI3K-AKT and ERK1/ERK2 signaling pathways. The sequence is that of Follicle-stimulating hormone receptor (FSHR) from Cavia porcellus (Guinea pig).